A 101-amino-acid chain; its full sequence is Small ribosomal subunit protein uS14 (101 aa).

This sequence belongs to the universal ribosomal protein uS14 family. Part of the 30S ribosomal subunit. Contacts proteins S3 and S10.

In terms of biological role, binds 16S rRNA, required for the assembly of 30S particles and may also be responsible for determining the conformation of the 16S rRNA at the A site. The polypeptide is Small ribosomal subunit protein uS14 (Burkholderia mallei (strain NCTC 10247)).